The chain runs to 285 residues: Involucrin (285 aa).

Disordered regions lie at residues 1–93 (MSQQ…QEQK), 120–256 (LEQQ…AQVQ), and 266–285 (LPLIEQQHQKQEVHDPPEHQ). The segment covering 27–39 (IDTQQEQVKQPTS) has biased composition (polar residues). 3 stretches are compositionally biased toward low complexity: residues 72-87 (EQQCEPQEQEQQQKQQ), 120-129 (LEQQQEQQES), and 137-147 (EQCLEQQQEQQ). Composition is skewed to basic and acidic residues over residues 149–165 (SQEKELHLEQEQQKEEL), 175–185 (EQCEKHQEAKN), and 200–233 (QQKEQLEQEKKLVDQHLDQEPAQRTEQPEKKEEQ). Residues 235-248 (LEQQGQQEGQLEQP) show a composition bias toward low complexity. Basic and acidic residues predominate over residues 272-285 (QHQKQEVHDPPEHQ).

It belongs to the involucrin family. In terms of assembly, directly or indirectly cross-linked to cornifelin (CNFN). Post-translationally, substrate of transglutaminase. Specific glutamines or lysines are cross-linked to keratins, desmoplakin and to inter involucrin molecules. In terms of tissue distribution, keratinocytes of epidermis and other stratified squamous epithelia.

It localises to the cytoplasm. In terms of biological role, part of the insoluble cornified cell envelope (CE) of stratified squamous epithelia. The polypeptide is Involucrin (IVL) (Canis lupus familiaris (Dog)).